Reading from the N-terminus, the 24-residue chain is Cupiennin-5a (24 aa).

Expressed by the venom gland.

It is found in the secreted. The protein is Cupiennin-5a of Cupiennius salei (American wandering spider).